Reading from the N-terminus, the 345-residue chain is MIELTNITKTFAGKQGDIQALKDVSLSVGKGEIYGVIGYSGAGKSTLIRCVNLLEQPDQGSVKVNDVELTTLKSGKLRETRSHIGMIFQGFNLLKTATVYDNIAIPLKLTGLNKKAVKDRVQKYLDIVGLADKHDAYPSELSGGQKQRVAIARALSHEPEVLLSDEATSALDPDTTEAILDLLLRINKELGITILLITHEMNVIQRVCDRVAVMENGEVIEEGYTKDIFISPQLRTTKRFVNSLFSHDIPDDLIDGLSENGQVAKLSFFGESSGDPALALVTKKYDIYPNILSGSITRIKDEAFGQLLVHFKGEQAEINDSFQFLQDQQVHVKGVTYDGENQRVS.

The region spanning 2-241 (IELTNITKTF…PQLRTTKRFV (240 aa)) is the ABC transporter domain. ATP is bound at residue 38–45 (GYSGAGKS).

This sequence belongs to the ABC transporter superfamily. Methionine importer (TC 3.A.1.24) family. In terms of assembly, the complex is composed of two ATP-binding proteins (MetN), two transmembrane proteins (MetI) and a solute-binding protein (MetQ).

It is found in the cell membrane. The enzyme catalyses L-methionine(out) + ATP + H2O = L-methionine(in) + ADP + phosphate + H(+). The catalysed reaction is D-methionine(out) + ATP + H2O = D-methionine(in) + ADP + phosphate + H(+). Its function is as follows. Part of the ABC transporter complex MetNIQ involved in methionine import. Responsible for energy coupling to the transport system. This is Methionine import ATP-binding protein MetN 4 from Oceanobacillus iheyensis (strain DSM 14371 / CIP 107618 / JCM 11309 / KCTC 3954 / HTE831).